Reading from the N-terminus, the 2190-residue chain is MNFHKGQPKEDLRVLFGPQCPDITDSITHIRDAISKDPTGLGFLTNILDELPSLWPTIAGAWPALKNVEGENQLLALGRLFEHESEVRVEASNLMMTPITVMRHVVDFWNLQDVATHPAFPSSSLSETEMPRIVDTQGFCVGLLAAIAVACSRNTQEFQYVASNAIRLSLCIGALVDLDEILCGSTTSLAVRWESVEDFNHLEKILNNNTEIPKGYTSCYTDVKSVTITIPNDSAERVKQEIHDHGLRTKQLSLRGRFHHEAHREGIQHIMKLCMNDSRFKLPRSDALLTPLRSSQGGEIFQQEALLHTVALDSILCAKANWYDVVSALINSTEMTVDQSRLLSIGPEEFVPRSARSRSVARRELESYGMQGFANESPQPSTASLSNSVQTFDSRPQAAEASPIAITGMACRYPNADTLAQLWELLELGRCTVKSPPESRFHMSDLQREPKGPFWGHFLERPDVFDHRFFNISAREAESMDPQQRVALQVAYEAMESAGYLGWQPNRLSQDIGCYVGVGSEDYTENVASRNANAFSITGTLQSFIAGRISHHFGWSGPSISLDTACSSAAVAIHLACKALQTNDCKIALAGGVNVLTNPRVYQNLSAASFLSPSGACKPFDASADGYCRGEGAGLFVLRPLQDAIDNGDPILGVIAGSAVNQGSNNSPITVPDAEAQRSLYNKAMSLAGVSPDEVTYVEAHGTGTQVGDPIELDSLRRTFGGPHRRNNLHIGSIKGNIGHTETSSGAAGLLKTILMLQQQRIPRQANFNQLNPKVKSLTPDRLVIASESTEWVSTKRVAMVSNYGASGSNAALIVKEHAPIGSEQNGTAPEYIQNKLAYNLAMKQNRDLPLNLTFSTSSDTTSLGARLEAISTGASADLIQKRPSNEPPVVLCFGGQNGLTATISKEVFDASALLRTHLEDCEEVGRTLGLLSLFPTIFSSAPITNIIHLHFILFSIQYASAKAWLDSGLRVSRIVGHSFGQLTALSVAGSLSVRDGIHLVTERARLIESSWGPESGIMLAVEGTEIEVQQLLDQTVESIEAIENAAARTPSASNLRLTRLQNSHAFHSRLVDSIVPGIMEVAGSLVYQTPIIPIEACSASGDWSTITAAEIVEHSRMPVYFRRAVERVAEKLQAPAVWLEAGSASPIIPMVRRVLESSSVANTYHKIDLGGSSGAQNLANVTSALWAQGVHVQFWPFDRAQHASFKWMNLPPYQFAQNSHWVDFDPAAFSSAGPSSGKQSAGQEAGLLCQLSESPDERLYHVNIQDALYRACTQGHAVLNQTLCPASMYMEMVLRAAASIFPTGNASEPAMSHIEDLTISSPLVLDPQGKVFLRLTRDGAGPTRPWLFSIFSSESNDHTLVHAEGTVCLHQERSRALARFQSMDRLLDSARSKTIEADPASNGLKGSTVYAALESVTNYGDYFRGVKQVFANGREASGLVSMMPSTTETNCNPILLDNFLQVAGIHVNCLSDRQSSEVFVCNAIGETFVINSLLKQENGASPSTWKVYTSYVRPSKTEIACDIYVMDCQTDTLSAAMMGVRFTSVSIRSLTRALAKLNNNVLETAEAQSVVEAAIPAEQSVVTATPSAPAADGHAANDLATVQEMLCELFGVSVAEVSPSVSLVDIGVDSLMSTEVLSEIKKRFQVDMSYTTLVDIPNIQGLVEHIFPGHSHAAPSRPVVEKAPVQSVAPQAVSHVPTPASNGPPLVSVARQCFDTTHAAVSHTSDAHWAGFFHTTYPKQMSLLTAYILEAFRALGSSLEASEPNEVLTPIAVLPRHEQLRKHLYKILDSVGLVRQMSTGELTLRQSGFEWVDWTNNETVESNALRVIVASPTGNSSAATMSPSKPIKMETVVWGERDNLQLRADIYYPETVDTTRKQRPIALMIHGGGHVMLSRKDIRPAQTQTLLDAGFLPVSIDYRLCPEVSLAEGPMADARDALSWVRRVLPNIPLLRADIRPDGNQVVAIGWSTGGHLAMTLPFTAPAAGIPAPDAVLAFYCPTNYEDPFWSNPNFPFGQTVASNEMEYDVWEGLQSMPIAGYNPALKERPLGGWMSTRDPRSRIALHMNWTGQTLPVLLKACTIKGNTEKCSPDDLSRPTEEDIQAVSPNYQIRVGRYNTPTFLIHGTSDDLVPCAQTESTHGALTASGVEAELRVVQEAAHLFDLYPASHAGQEAKAAVAEGYEFLRTHVQL.

The segment at 14 to 268 is N-terminal acylcarrier protein transacylase domain (SAT); sequence VLFGPQCPDI…HHEAHREGIQ (255 aa). The 417-residue stretch at 401-817 folds into the Ketosynthase family 3 (KS3) domain; it reads ASPIAITGMA…GSNAALIVKE (417 aa). Residues C566, H701, and H740 each act as for beta-ketoacyl synthase activity in the active site. The segment at 893 to 1190 is malonyl-CoA:ACP transacylase (MAT) domain; sequence CFGGQNGLTA…NVTSALWAQG (298 aa). The active-site For acyl/malonyl transferase activity is S979. The interval 1243 to 1375 is N-terminal hotdog fold; sequence GQEAGLLCQL…GTVCLHQERS (133 aa). The PKS/mFAS DH domain maps to 1243 to 1552; that stretch reads GQEAGLLCQL…FTSVSIRSLT (310 aa). The interval 1251–1556 is product template (PT) domain; sequence QLSESPDERL…SIRSLTRALA (306 aa). H1277 acts as the Proton acceptor; for dehydratase activity in catalysis. Positions 1401–1552 are C-terminal hotdog fold; the sequence is ASNGLKGSTV…FTSVSIRSLT (152 aa). The Proton donor; for dehydratase activity role is filled by D1458. The 75-residue stretch at 1597 to 1671 folds into the Carrier domain; sequence ANDLATVQEM…GLVEHIFPGH (75 aa). S1631 carries the O-(pantetheine 4'-phosphoryl)serine modification. The interval 1840-2187 is methyltransferase (CMeT) domain; that stretch reads ATMSPSKPIK…AEGYEFLRTH (348 aa). Active-site for thioesterase activity residues include S1969, D2127, and H2159.

Its subcellular location is the cytoplasm. It localises to the cytosol. The catalysed reaction is 3 malonyl-CoA + acetyl-CoA + S-adenosyl-L-methionine + H(+) = 5-methylorsellinate + S-adenosyl-L-homocysteine + 3 CO2 + 4 CoA. Its pathway is secondary metabolite biosynthesis; terpenoid biosynthesis. Functionally, non-reducing polyketide synthase; part of the gene cluster that mediates the biosynthesis of mycophenolic acid (MPA), the first isolated antibiotic natural product in the world obtained from a culture of Penicillium brevicompactum in 1893. MpaC' catalyzes the synthesis of 5-methylorsellinic acid (5MOA) via the condensation of 1 acetyl-CoA starter unit with 3 malonyl-CoA units and one methylation step. The first step of the pathway is the synthesis of 5-methylorsellinic acid (5MOA) by the cytosolic polyketide synthase mpaC. 5MOA is then converted to the phthalide compound 5,7-dihydroxy-4,6-dimethylphthalide (DHMP) by the endoplasmic reticulum-bound cytochrome P450 monooxygenase mpaDE. MpaDE first catalyzes hydroxylation of 5-MOA to 4,6-dihydroxy-2-(hydroxymethyl)-3-methylbenzoic acid (DHMB). MpaDE then acts as a lactone synthase that catalyzes the ring closure to convert DHMB into DHMP. The next step is the prenylation of DHMP by the Golgi apparatus-associated prenyltransferase mpaA to yield farnesyl-DHMP (FDHMP). The ER-bound oxygenase mpaB then mediates the oxidative cleavage the C19-C20 double bond in FDHMP to yield FDHMP-3C via a mycophenolic aldehyde intermediate. The O-methyltransferase mpaG catalyzes the methylation of FDHMP-3C to yield MFDHMP-3C. After the cytosolic methylation of FDHMP-3C, MFDHMP-3C enters into peroxisomes probably via free diffusion due to its low molecular weight. Upon a peroxisomal CoA ligation reaction, catalyzed by a beta-oxidation component enzyme acyl-CoA ligase ACL891, MFDHMP-3C-CoA would then be restricted to peroxisomes for the following beta-oxidation pathway steps. The peroxisomal beta-oxidation machinery than converts MFDHMP-3C-CoA into MPA_CoA, via a beta-oxidation chain-shortening process. Finally mpaH acts as a peroxisomal acyl-CoA hydrolase with high substrate specificity toward MPA-CoA to release the final product MPA. The polypeptide is Non-reducing polyketide synthase mapC' (Penicillium brevicompactum).